The following is a 188-amino-acid chain: UPF0200 protein M1627_1244 (188 aa).

ATP is bound at residue 15 to 22; the sequence is GMPGSGKS.

Belongs to the UPF0200 family.

The sequence is that of UPF0200 protein M1627_1244 from Saccharolobus islandicus (strain M.16.27) (Sulfolobus islandicus).